A 466-amino-acid polypeptide reads, in one-letter code: Ribulose bisphosphate carboxylase large chain (466 aa).

Residue lysine 5 is modified to N6,N6,N6-trimethyllysine. Substrate-binding residues include asparagine 114 and threonine 164. Lysine 166 serves as the catalytic Proton acceptor. Substrate is bound at residue lysine 168. The Mg(2+) site is built by lysine 192, aspartate 194, and glutamate 195. Lysine 192 carries the N6-carboxylysine modification. The active-site Proton acceptor is the histidine 285. Substrate contacts are provided by arginine 286, histidine 318, and serine 370.

Belongs to the RuBisCO large chain family. Type I subfamily. In terms of assembly, heterohexadecamer of 8 large chains and 8 small chains; disulfide-linked. The disulfide link is formed within the large subunit homodimers. Requires Mg(2+) as cofactor. Post-translationally, the disulfide bond which can form in the large chain dimeric partners within the hexadecamer appears to be associated with oxidative stress and protein turnover.

The protein resides in the plastid. Its subcellular location is the chloroplast. The catalysed reaction is 2 (2R)-3-phosphoglycerate + 2 H(+) = D-ribulose 1,5-bisphosphate + CO2 + H2O. The enzyme catalyses D-ribulose 1,5-bisphosphate + O2 = 2-phosphoglycolate + (2R)-3-phosphoglycerate + 2 H(+). RuBisCO catalyzes two reactions: the carboxylation of D-ribulose 1,5-bisphosphate, the primary event in carbon dioxide fixation, as well as the oxidative fragmentation of the pentose substrate in the photorespiration process. Both reactions occur simultaneously and in competition at the same active site. This chain is Ribulose bisphosphate carboxylase large chain, found in Averrhoa carambola (Star fruit).